The primary structure comprises 398 residues: Lysophospholipid acyltransferase LPEAT1 (398 aa).

Residues 1 to 24 (MESELKDLNSNSNPPSSKEDRPLL) are disordered. At Ser28 the chain carries Phosphoserine. A helical membrane pass occupies residues 66 to 86 (LAVALVTLVPLRFLLSMSILL). Residues 158 to 185 (RDSDMDSNPKTTSTEINQKGEAATEEPE) form a disordered region. The span at 163 to 174 (DSNPKTTSTEIN) shows a compositional bias: polar residues. The HXXXXD motif motif lies at 194-199 (HVSYLD).

Belongs to the 1-acyl-sn-glycerol-3-phosphate acyltransferase family.

Its subcellular location is the endoplasmic reticulum membrane. The catalysed reaction is a 1-acyl-sn-glycero-3-phosphoethanolamine + an acyl-CoA = a 1,2-diacyl-sn-glycero-3-phosphoethanolamine + CoA. It catalyses the reaction a 1-acyl-sn-glycero-3-phosphate + an acyl-CoA = a 1,2-diacyl-sn-glycero-3-phosphate + CoA. The enzyme catalyses a 1-acyl-sn-glycero-3-phosphocholine + an acyl-CoA = a 1,2-diacyl-sn-glycero-3-phosphocholine + CoA. It carries out the reaction a 1-acyl-sn-glycero-3-phospho-L-serine + an acyl-CoA = a 1,2-diacyl-sn-glycero-3-phospho-L-serine + CoA. It participates in lipid metabolism; phospholipid metabolism. Functionally, possesses acyl-CoA-dependent lysophospholipid acyltransferase activity with a subset of lysophospholipids as substrates. Exhibits strong acylation activity on lysophosphatidylethanolamine (LPE) and lysophosphatidate (LPA), and lower activity on lysophosphatidylcholine (LPC) and lysophosphatidylserine (LPS). Exhibits acylation activity on both LPE and LPC. Has a preference for 18:1-LPE over 16:0-LPE as acceptor. Palmitoyl-CoA (16:0-CoA) is a better acyl donor than oleoyl-CoA (18:1-CoA). Among several different acyl-CoA species the best acyl donor is palmitoyl-CoA (16:0-CoA). Activity is calcium-independent. Its activity is essential for maintaining adequate levels of phosphatidylethanolamine (PE), LPE and LPC in the cells, which is crucial for plant growth regulation. The protein is Lysophospholipid acyltransferase LPEAT1 of Arabidopsis thaliana (Mouse-ear cress).